Here is a 123-residue protein sequence, read N- to C-terminus: Thioredoxin domain-containing protein 17 (123 aa).

One can recognise a Thioredoxin domain in the interval 41-123 (SWCPDCVTAE…DLVRMMFTED (83 aa)). Residues Cys-43 and Cys-46 each act as nucleophile in the active site. Cys-43 and Cys-46 are oxidised to a cystine.

The protein belongs to the thioredoxin family. As to expression, predominantly expressed in liver, brain and muscle. Also expressed in kidney, intestine, skin, stomach, gill and head kidney.

It localises to the cytoplasm. In terms of biological role, disulfide reductase. May participate in various redox reactions through the reversible oxidation of its active center dithiol to a disulfide and catalyze dithiol-disulfide exchange reactions. Has peroxidase activity and may contribute to the elimination of cellular hydrogen peroxide. May function as an antioxidant involved in response to viral infection. The chain is Thioredoxin domain-containing protein 17 from Epinephelus coioides (Orange-spotted grouper).